Consider the following 397-residue polypeptide: MSKVFIATANAGKAHDADIFSVSACNSFTVSCSGDGYLKVWDNKLLDNENPKDKSYSHFVHKSGLHHVDVLQAIERDAFELCLVATTSFSGDLLFYRITREDETKKVIFEKLDLLDSDMKKHSFWALKWGASNDRLLSHRLVATDVKGTTYIWKFHPFADESNSLTLNWSPTLELQGTVESPMTPSQFATSVDISERGLIATGFNNGTVQISELSTLRPLYNFESQHSMINNSNSIRSVKFSPQGSLLAIAHDSNSFGCITLYETEFGERIGSLSVPTHSSQASLGEFAHSSWVMSLSFNDSGETLCSAGWDGKLRFWDVKTKERITTLNMHCDDIEIEEDILAVDEHGDSLAEPGVFDVKFLKKGWRSGMGADLNESLCCVCLDRSIRWFREAGGK.

WD repeat units follow at residues 21-42 (SVSACNSFTVSCSGDGYLKVWD), 67-101 (HVDVLQAIERDAFELCLVATTSFSGDLLFYRITRE), 126-157 (ALKWGASNDRLLSHRLVATDVKGTTYIWKFHP), 191-213 (SVDISERGLIATGFNNGTVQISE), 238-264 (SVKFSPQGSLLAIAHDSNSFGCITLYE), 296-319 (SLSFNDSGETLCSAGWDGKLRFWD), and 359-392 (DVKFLKKGWRSGMGADLNESLCCVCLDRSIRWFR).

It belongs to the SKI8 family. Component of the SKI complex composed of at least SKI2, SKI3 and SKI8. The SKI complex interacts with SKI7, which makes the link between the SKI complex and the exosome in order to perform mRNA degradation.

The protein resides in the cytoplasm. It localises to the nucleus. Its subcellular location is the chromosome. In terms of biological role, involved in double-strand break (DSB) formation during meiotic recombination through stabilization of SPO11 association with meiotic chromosome and helping SPO11 to recruit other DSB proteins like REC102 and REC104 to meiotic chromosomes. Also a component of the SKI complex involved in 3'-mRNA degradation pathway. Represses dsRNA virus propagation by specifically blocking translation of viral mRNAs, perhaps recognizing the absence of CAP or poly(A). Essential for controlling the propagation of M double-stranded RNA (dsRNA) and thus for preventing virus-induced cytopathology. This is Antiviral protein SKI8 (SKI8) from Saccharomyces cerevisiae (strain ATCC 204508 / S288c) (Baker's yeast).